The primary structure comprises 271 residues: Shikimate kinase (271 aa).

ATP is bound at residue 83-93; the sequence is PIAMGLKSSSA.

This sequence belongs to the GHMP kinase family. Archaeal shikimate kinase subfamily.

The protein localises to the cytoplasm. The catalysed reaction is shikimate + ATP = 3-phosphoshikimate + ADP + H(+). It functions in the pathway metabolic intermediate biosynthesis; chorismate biosynthesis; chorismate from D-erythrose 4-phosphate and phosphoenolpyruvate: step 5/7. The protein is Shikimate kinase of Thermococcus kodakarensis (strain ATCC BAA-918 / JCM 12380 / KOD1) (Pyrococcus kodakaraensis (strain KOD1)).